The following is a 280-amino-acid chain: Tryptophan synthase alpha chain (280 aa).

Catalysis depends on proton acceptor residues Glu49 and Asp60.

Belongs to the TrpA family. As to quaternary structure, tetramer of two alpha and two beta chains.

The catalysed reaction is (1S,2R)-1-C-(indol-3-yl)glycerol 3-phosphate + L-serine = D-glyceraldehyde 3-phosphate + L-tryptophan + H2O. It participates in amino-acid biosynthesis; L-tryptophan biosynthesis; L-tryptophan from chorismate: step 5/5. In terms of biological role, the alpha subunit is responsible for the aldol cleavage of indoleglycerol phosphate to indole and glyceraldehyde 3-phosphate. In Corynebacterium glutamicum (strain R), this protein is Tryptophan synthase alpha chain.